The primary structure comprises 146 residues: Interleukin-3 (146 aa).

The N-terminal stretch at 1–17 (MSSLSILHLLLLLLSLH) is a signal peptide. Asn-65 carries an N-linked (GlcNAc...) asparagine glycan.

This sequence belongs to the IL-3 family. Monomer. As to expression, activated T-cells, mast cells, natural killer cells.

It is found in the secreted. Granulocyte/macrophage colony-stimulating factors are cytokines that act in hematopoiesis by controlling the production, differentiation, and function of 2 related white cell populations of the blood, the granulocytes and the monocytes-macrophages. Its function is as follows. This CSF induces granulocytes, macrophages, mast cells, stem cells, erythroid cells, eosinophils and megakaryocytes. This Ovis aries (Sheep) protein is Interleukin-3 (IL3).